Reading from the N-terminus, the 278-residue chain is Putative pyruvate, phosphate dikinase regulatory protein (278 aa).

An ADP-binding site is contributed by 156–163; the sequence is GVSRTSKT.

This sequence belongs to the pyruvate, phosphate/water dikinase regulatory protein family. PDRP subfamily.

The catalysed reaction is N(tele)-phospho-L-histidyl/L-threonyl-[pyruvate, phosphate dikinase] + ADP = N(tele)-phospho-L-histidyl/O-phospho-L-threonyl-[pyruvate, phosphate dikinase] + AMP + H(+). It carries out the reaction N(tele)-phospho-L-histidyl/O-phospho-L-threonyl-[pyruvate, phosphate dikinase] + phosphate + H(+) = N(tele)-phospho-L-histidyl/L-threonyl-[pyruvate, phosphate dikinase] + diphosphate. Its function is as follows. Bifunctional serine/threonine kinase and phosphorylase involved in the regulation of the pyruvate, phosphate dikinase (PPDK) by catalyzing its phosphorylation/dephosphorylation. This is Putative pyruvate, phosphate dikinase regulatory protein from Lactobacillus acidophilus (strain ATCC 700396 / NCK56 / N2 / NCFM).